The primary structure comprises 535 residues: Putative subtilisin-like proteinase 2 (535 aa).

A signal peptide spans 1-17; the sequence is MFFVGVAVLAALQSVWG. In terms of domain architecture, Peptidase S8 spans 221–475; sequence NWIFRVLQIK…IPRLGCKGRI (255 aa). Catalysis depends on charge relay system residues Asp-255 and His-277. The cysteines at positions 369 and 400 are disulfide-linked. Ser-420 functions as the Charge relay system in the catalytic mechanism. The helical transmembrane segment at 489-509 threads the bilayer; the sequence is IVPLVFVVLITSALLYLLLIG.

Belongs to the peptidase S8 family.

It is found in the membrane. Functionally, may be involved in the degradation of proteins for nutrient acquisition or possess a regulatory function by proteolytic activation of proproteins. In Encephalitozoon cuniculi (strain GB-M1) (Microsporidian parasite), this protein is Putative subtilisin-like proteinase 2 (SPL2).